A 218-amino-acid chain; its full sequence is Putative NAD(P)H nitroreductase SH0546 (218 aa).

Belongs to the nitroreductase family. Requires FMN as cofactor.

The polypeptide is Putative NAD(P)H nitroreductase SH0546 (Staphylococcus haemolyticus (strain JCSC1435)).